The sequence spans 238 residues: Uridylate kinase (238 aa).

12 to 15 lines the ATP pocket; the sequence is KLSG. G54 contacts UMP. The ATP site is built by G55 and R59. UMP-binding positions include D74 and 135–142; that span reads TGNPFFTT. 3 residues coordinate ATP: T162, Y168, and D171.

This sequence belongs to the UMP kinase family. Homohexamer.

It localises to the cytoplasm. The catalysed reaction is UMP + ATP = UDP + ADP. It participates in pyrimidine metabolism; CTP biosynthesis via de novo pathway; UDP from UMP (UMPK route): step 1/1. Its activity is regulated as follows. Inhibited by UTP. Catalyzes the reversible phosphorylation of UMP to UDP. In Bordetella parapertussis (strain 12822 / ATCC BAA-587 / NCTC 13253), this protein is Uridylate kinase.